A 552-amino-acid polypeptide reads, in one-letter code: CTP synthase (552 aa).

The interval 1–267 (MAKFIFVTGG…AEQTLKLLRM (267 aa)) is amidoligase domain. S13 contributes to the CTP binding site. Position 13 (S13) interacts with UTP. ATP-binding positions include 14-19 (SIGKGI) and D71. 2 residues coordinate Mg(2+): D71 and E141. Residues 148–150 (DIE), 188–193 (KTKPTQ), and K224 contribute to the CTP site. Residues 188–193 (KTKPTQ) and K224 each bind UTP. Residues 292-534 (DIAIVGKYVQ…IQAAGNHKSQ (243 aa)) enclose the Glutamine amidotransferase type-1 domain. L-glutamine is bound at residue G354. C381 (nucleophile; for glutamine hydrolysis) is an active-site residue. Residues 382–385 (LGMQ), E405, and R462 contribute to the L-glutamine site. Residues H507 and E509 contribute to the active site. The segment at 533-552 (SQPISDELDNQSTEMSISLS) is disordered.

The protein belongs to the CTP synthase family. In terms of assembly, homotetramer.

It carries out the reaction UTP + L-glutamine + ATP + H2O = CTP + L-glutamate + ADP + phosphate + 2 H(+). It catalyses the reaction L-glutamine + H2O = L-glutamate + NH4(+). The catalysed reaction is UTP + NH4(+) + ATP = CTP + ADP + phosphate + 2 H(+). The protein operates within pyrimidine metabolism; CTP biosynthesis via de novo pathway; CTP from UDP: step 2/2. Its activity is regulated as follows. Allosterically activated by GTP, when glutamine is the substrate; GTP has no effect on the reaction when ammonia is the substrate. The allosteric effector GTP functions by stabilizing the protein conformation that binds the tetrahedral intermediate(s) formed during glutamine hydrolysis. Inhibited by the product CTP, via allosteric rather than competitive inhibition. Catalyzes the ATP-dependent amination of UTP to CTP with either L-glutamine or ammonia as the source of nitrogen. Regulates intracellular CTP levels through interactions with the four ribonucleotide triphosphates. The polypeptide is CTP synthase (Picosynechococcus sp. (strain ATCC 27264 / PCC 7002 / PR-6) (Agmenellum quadruplicatum)).